The primary structure comprises 382 residues: Lipid-A-disaccharide synthase (382 aa).

The protein belongs to the LpxB family.

The catalysed reaction is 2-N,3-O-bis[(3R)-3-hydroxytetradecanoyl]-alpha-D-glucosaminyl 1-phosphate + UDP-2-N,3-O-bis[(3R)-3-hydroxytetradecanoyl]-alpha-D-glucosamine = lipid A disaccharide (E. coli) + UDP + H(+). The enzyme catalyses a lipid X + a UDP-2-N,3-O-bis[(3R)-3-hydroxyacyl]-alpha-D-glucosamine = a lipid A disaccharide + UDP + H(+). The protein operates within glycolipid biosynthesis; lipid IV(A) biosynthesis; lipid IV(A) from (3R)-3-hydroxytetradecanoyl-[acyl-carrier-protein] and UDP-N-acetyl-alpha-D-glucosamine: step 5/6. Its function is as follows. Condensation of UDP-2,3-diacylglucosamine and 2,3-diacylglucosamine-1-phosphate to form lipid A disaccharide, a precursor of lipid A, a phosphorylated glycolipid that anchors the lipopolysaccharide to the outer membrane of the cell. This Citrobacter koseri (strain ATCC BAA-895 / CDC 4225-83 / SGSC4696) protein is Lipid-A-disaccharide synthase.